The sequence spans 339 residues: Ketol-acid reductoisomerase (NADP(+)) (339 aa).

Residues 1-182 (MRVYYDRDAD…GGGRAGIIET (182 aa)) form the KARI N-terminal Rossmann domain. Residues 24–27 (YGSQ), Arg-48, Ser-51, Ser-53, and 83–86 (DELQ) contribute to the NADP(+) site. His-108 is an active-site residue. Gly-134 is a binding site for NADP(+). Residues 183 to 328 (TFKEECETDL…AKLRDMMPWI (146 aa)) enclose the KARI C-terminal knotted domain. Mg(2+) contacts are provided by Asp-191, Glu-195, Glu-227, and Glu-231. Ser-252 serves as a coordination point for substrate.

It belongs to the ketol-acid reductoisomerase family. Requires Mg(2+) as cofactor.

The enzyme catalyses (2R)-2,3-dihydroxy-3-methylbutanoate + NADP(+) = (2S)-2-acetolactate + NADPH + H(+). The catalysed reaction is (2R,3R)-2,3-dihydroxy-3-methylpentanoate + NADP(+) = (S)-2-ethyl-2-hydroxy-3-oxobutanoate + NADPH + H(+). The protein operates within amino-acid biosynthesis; L-isoleucine biosynthesis; L-isoleucine from 2-oxobutanoate: step 2/4. It functions in the pathway amino-acid biosynthesis; L-valine biosynthesis; L-valine from pyruvate: step 2/4. Involved in the biosynthesis of branched-chain amino acids (BCAA). Catalyzes an alkyl-migration followed by a ketol-acid reduction of (S)-2-acetolactate (S2AL) to yield (R)-2,3-dihydroxy-isovalerate. In the isomerase reaction, S2AL is rearranged via a Mg-dependent methyl migration to produce 3-hydroxy-3-methyl-2-ketobutyrate (HMKB). In the reductase reaction, this 2-ketoacid undergoes a metal-dependent reduction by NADPH to yield (R)-2,3-dihydroxy-isovalerate. The protein is Ketol-acid reductoisomerase (NADP(+)) of Bradyrhizobium diazoefficiens (strain JCM 10833 / BCRC 13528 / IAM 13628 / NBRC 14792 / USDA 110).